The sequence spans 570 residues: Protein NRT1/ PTR FAMILY 8.1 (570 aa).

Phosphothreonine is present on Thr-98. A run of 10 helical transmembrane segments spans residues 99–119 (IATF…SASV), 140–160 (AVFF…KPCV), 182–202 (FFNW…TVLV), 210–230 (WGWG…FFFF), 329–349 (IITL…YSQM), 377–397 (LFDT…IIPL), 414–434 (MGIG…LEVV), 454–474 (IFWQ…TFIG), 494–514 (LSLT…TVVM), and 537–557 (YFFY…LWIS).

This sequence belongs to the major facilitator superfamily. Proton-dependent oligopeptide transporter (POT/PTR) (TC 2.A.17) family. Expressed in cotyledons, hypocotyls, leaves, roots, flowers, pistils and vascular tissue of sepals, anthers, carpels and funiculi. Not detected in seeds.

It is found in the cell membrane. Peptide transporter. Mediates the transport of di- and tripeptides. High affinity transporter with low selectivity. No transport of amino acids. The chain is Protein NRT1/ PTR FAMILY 8.1 (NPF8.1) from Arabidopsis thaliana (Mouse-ear cress).